The primary structure comprises 140 residues: ATP synthase epsilon chain (140 aa).

The protein belongs to the ATPase epsilon chain family. As to quaternary structure, F-type ATPases have 2 components, CF(1) - the catalytic core - and CF(0) - the membrane proton channel. CF(1) has five subunits: alpha(3), beta(3), gamma(1), delta(1), epsilon(1). CF(0) has three main subunits: a, b and c.

The protein resides in the cell inner membrane. In terms of biological role, produces ATP from ADP in the presence of a proton gradient across the membrane. The polypeptide is ATP synthase epsilon chain (Janthinobacterium sp. (strain Marseille) (Minibacterium massiliensis)).